The following is a 128-amino-acid chain: Sulfurtransferase TusD (128 aa).

The Cysteine persulfide intermediate role is filled by Cys-78.

This sequence belongs to the DsrE/TusD family. As to quaternary structure, heterohexamer, formed by a dimer of trimers. The hexameric TusBCD complex contains 2 copies each of TusB, TusC and TusD. The TusBCD complex interacts with TusE.

Its subcellular location is the cytoplasm. Functionally, part of a sulfur-relay system required for 2-thiolation of 5-methylaminomethyl-2-thiouridine (mnm(5)s(2)U) at tRNA wobble positions. Accepts sulfur from TusA and transfers it in turn to TusE. The protein is Sulfurtransferase TusD of Salmonella newport (strain SL254).